The primary structure comprises 131 residues: Protein Turandot M (131 aa).

The signal sequence occupies residues 1 to 23; that stretch reads MNPTIYLSCLMVFSVFLLGKVNA.

It belongs to the Turandot family.

Its subcellular location is the secreted. In terms of biological role, a humoral factor that may play a role in stress tolerance. Requires Mekk1 expression in the fat body to regulate response to septic injury and consequent immune response. This is Protein Turandot M from Drosophila melanogaster (Fruit fly).